A 209-amino-acid chain; its full sequence is Uracil phosphoribosyltransferase (209 aa).

5-phospho-alpha-D-ribose 1-diphosphate is bound by residues R79, R104, and 131–139; that span reads DPMLATGGS. Residues I194 and 199–201 each bind uracil; that span reads GDA. Residue D200 coordinates 5-phospho-alpha-D-ribose 1-diphosphate.

Belongs to the UPRTase family. It depends on Mg(2+) as a cofactor.

It carries out the reaction UMP + diphosphate = 5-phospho-alpha-D-ribose 1-diphosphate + uracil. The protein operates within pyrimidine metabolism; UMP biosynthesis via salvage pathway; UMP from uracil: step 1/1. Its activity is regulated as follows. Allosterically activated by GTP. Catalyzes the conversion of uracil and 5-phospho-alpha-D-ribose 1-diphosphate (PRPP) to UMP and diphosphate. This chain is Uracil phosphoribosyltransferase, found in Lactobacillus delbrueckii subsp. bulgaricus (strain ATCC 11842 / DSM 20081 / BCRC 10696 / JCM 1002 / NBRC 13953 / NCIMB 11778 / NCTC 12712 / WDCM 00102 / Lb 14).